A 496-amino-acid chain; its full sequence is Aspartyl/glutamyl-tRNA(Asn/Gln) amidotransferase subunit B (496 aa).

It belongs to the GatB/GatE family. GatB subfamily. In terms of assembly, heterotrimer of A, B and C subunits.

The catalysed reaction is L-glutamyl-tRNA(Gln) + L-glutamine + ATP + H2O = L-glutaminyl-tRNA(Gln) + L-glutamate + ADP + phosphate + H(+). It carries out the reaction L-aspartyl-tRNA(Asn) + L-glutamine + ATP + H2O = L-asparaginyl-tRNA(Asn) + L-glutamate + ADP + phosphate + 2 H(+). Its function is as follows. Allows the formation of correctly charged Asn-tRNA(Asn) or Gln-tRNA(Gln) through the transamidation of misacylated Asp-tRNA(Asn) or Glu-tRNA(Gln) in organisms which lack either or both of asparaginyl-tRNA or glutaminyl-tRNA synthetases. The reaction takes place in the presence of glutamine and ATP through an activated phospho-Asp-tRNA(Asn) or phospho-Glu-tRNA(Gln). The sequence is that of Aspartyl/glutamyl-tRNA(Asn/Gln) amidotransferase subunit B from Prochlorococcus marinus (strain MIT 9303).